Here is a 262-residue protein sequence, read N- to C-terminus: Cytochrome c oxidase subunit 3 (262 aa).

The next 6 membrane-spanning stretches (helical) occupy residues 39–59 (YTMTLFILGNVITILTMYQWW), 83–103 (GMILFIVSEVFFFISFFWAFF), 120–140 (VGIAAFNPFQIPLLNTAILLA), 163–183 (GLFFTIVLGVYFTILQAYEYI), 201–221 (ATGFHGLHVLIGTTFLLICFL), and 240–260 (AWYWHFVDVVWLFLYITIYWW).

Belongs to the cytochrome c oxidase subunit 3 family. In terms of assembly, component of the cytochrome c oxidase (complex IV, CIV), a multisubunit enzyme composed of a catalytic core of 3 subunits and several supernumerary subunits. The complex exists as a monomer or a dimer and forms supercomplexes (SCs) in the inner mitochondrial membrane with ubiquinol-cytochrome c oxidoreductase (cytochrome b-c1 complex, complex III, CIII).

Its subcellular location is the mitochondrion inner membrane. The catalysed reaction is 4 Fe(II)-[cytochrome c] + O2 + 8 H(+)(in) = 4 Fe(III)-[cytochrome c] + 2 H2O + 4 H(+)(out). Its function is as follows. Component of the cytochrome c oxidase, the last enzyme in the mitochondrial electron transport chain which drives oxidative phosphorylation. The respiratory chain contains 3 multisubunit complexes succinate dehydrogenase (complex II, CII), ubiquinol-cytochrome c oxidoreductase (cytochrome b-c1 complex, complex III, CIII) and cytochrome c oxidase (complex IV, CIV), that cooperate to transfer electrons derived from NADH and succinate to molecular oxygen, creating an electrochemical gradient over the inner membrane that drives transmembrane transport and the ATP synthase. Cytochrome c oxidase is the component of the respiratory chain that catalyzes the reduction of oxygen to water. Electrons originating from reduced cytochrome c in the intermembrane space (IMS) are transferred via the dinuclear copper A center (CU(A)) of subunit 2 and heme A of subunit 1 to the active site in subunit 1, a binuclear center (BNC) formed by heme A3 and copper B (CU(B)). The BNC reduces molecular oxygen to 2 water molecules using 4 electrons from cytochrome c in the IMS and 4 protons from the mitochondrial matrix. The sequence is that of Cytochrome c oxidase subunit 3 (COIII) from Anopheles gambiae (African malaria mosquito).